Consider the following 297-residue polypeptide: Urease accessory protein UreD (297 aa).

It belongs to the UreD family. As to quaternary structure, ureD, UreF and UreG form a complex that acts as a GTP-hydrolysis-dependent molecular chaperone, activating the urease apoprotein by helping to assemble the nickel containing metallocenter of UreC. The UreE protein probably delivers the nickel.

The protein localises to the cytoplasm. Its function is as follows. Required for maturation of urease via the functional incorporation of the urease nickel metallocenter. This is Urease accessory protein UreD from Prochlorococcus marinus subsp. pastoris (strain CCMP1986 / NIES-2087 / MED4).